A 531-amino-acid chain; its full sequence is MALKAILFLGLFLVVIVSPITVYGGAVCPASSTFGRGSFPDGFLFGATTSAFQHEGAAEEGGRGSSIWDSFTLKQHSESNNNLDGRLGVDFYHHYKEDVQLLKKLNMDAFRFSISWSRIFPHGKKDKGVSETGVKFYNDLINELIANGVTPLVTLFQWDVPQALEDEYGGFLSDRILEDFRDFAQFAFNKYGDRVKHWVTINEPYEFSRGGYETGEKAPGRCSKYVNEKCVAGKSGHEVYTVSHNLLLAHAEAVEEFRKCGKCTGGKIGIVQSPMWFEPYDKKSTSSPSEEIVKRAMDFTLGWHMEPITHGDYPQAMKDVVGSRLPSFTPEQKEKLKGSYDFVGINYFTSTFVAHTDNVNPEKPSWEADSRLQLHSNNVDGFKIGSQPATAKYPVCADGLRKVLKYIKENYNDPEIIVTGNGYKETLEEKDVLPDALSDSNRKYYHMRHLMALHGAVCEDKVNVKGYFVSSLMDGLEWEDGYKTRSGLYYVDYGHNMGRHEKQSAKWLSKLLEKVPDTIQSKVDSDSRKEL.

Residues 1–24 form the signal peptide; the sequence is MALKAILFLGLFLVVIVSPITVYG. Residues Gln53 and 202–203 each bind a beta-D-glucoside; that span reads NE. Catalysis depends on Glu203, which acts as the Proton donor. A disulfide bridge connects residues Cys222 and Cys230. A beta-D-glucoside is bound by residues Phe348 and 477–478; that span reads EW.

This sequence belongs to the glycosyl hydrolase 1 family.

The protein is Probable inactive beta-glucosidase 25 of Arabidopsis thaliana (Mouse-ear cress).